The primary structure comprises 1105 residues: Ran-binding protein 6 (1105 aa).

Alanine 2 carries the post-translational modification N-acetylalanine. HEAT repeat units lie at residues 219-257, 361-399, 402-440, and 444-483; these read FKDF…TVPK, KVVL…GCHQ, ESIL…DFAP, and KKFH…DCPK. The tract at residues 333 to 383 is ran-GTP binding; it reads DEMEEDDFDSNAVAAESALDRLACGLGGKVVLPMTKEHIMQMLQSPDWKYR. A coiled-coil region spans residues 806–842; it reads KAKLEGHFKNQELRQVKRQEENYDQQVEMSLQDEDEC. HEAT repeat units lie at residues 866-905, 908-946, and 949-987; these read LPWF…HCSP, FKYV…FGGD, and RSLC…IGKI.

This sequence belongs to the importin beta family.

It is found in the cytoplasm. Its subcellular location is the nucleus. Functionally, may function in nuclear protein import as nuclear transport receptor. This is Ran-binding protein 6 (RANBP6) from Homo sapiens (Human).